Reading from the N-terminus, the 148-residue chain is Leghemoglobin 2 (148 aa).

One can recognise a Globin domain in the interval 2 to 148; sequence GFTEKQEALV…LSAAIKKAMS (147 aa). Y30 is subject to Nitrated tyrosine. Residue S45 coordinates heme b. S45 is subject to Phosphoserine. An O2-binding site is contributed by H63. Heme b is bound by residues K66, H95, and K98. The residue at position 136 (Y136) is a Nitrated tyrosine.

Belongs to the plant globin family. In terms of assembly, monomer. In terms of processing, nitrated in effective nodules and particularly in hypoxic conditions; this mechanism may play a protective role in the symbiosis by buffering toxic peroxynitrite NO(2)(-). Nitration level decrease during nodule senescence. Phosphorylation at Ser-45 disrupts the molecular environment of its porphyrin ring oxygen binding pocket, thus leading to a reduced oxygen consumption and to the delivery of oxygen O(2) to symbiosomes. In terms of tissue distribution, stem nodules.

It is found in the cytoplasm. Its subcellular location is the cytosol. The protein localises to the nucleus. Functionally, leghemoglobin that reversibly binds oxygen O(2) through a pentacoordinated heme iron. In stem nodules, facilitates the diffusion of oxygen to the bacteroids while preventing the bacterial nitrogenase from being inactivated by buffering dioxygen, nitric oxide and carbon monoxide, and promoting the formation of reactive oxygen species (ROS, e.g. H(2)O(2)). This role is essential for symbiotic nitrogen fixation (SNF). The sequence is that of Leghemoglobin 2 from Sesbania rostrata.